Here is a 918-residue protein sequence, read N- to C-terminus: Band 3 anion exchange protein (918 aa).

Residues 1–48 (MENDLSFGEDVMSYEEESDSAFPSPIRPTPPGHSGNYDLEQSRQEEDS) are disordered. The Cytoplasmic segment spans residues 1-392 (MENDLSFGED…ISDFTDALDP (392 aa)). Residues 393 to 416 (QVLAAVIFIYFAALSPAITFGGLL) form a helical membrane-spanning segment. The Extracellular segment spans residues 417-424 (ADKTEHMM). Residues 425–445 (GVSELMISTCVQGIIFAFIAA) form a helical membrane-spanning segment. The Cytoplasmic portion of the chain corresponds to 446-448 (QPT). Residues 449-465 (LVIGFSGPLLVFEEAFF) form a discontinuously helical membrane-spanning segment. The Extracellular segment spans residues 466–474 (AFCKSQEIE). The chain crosses the membrane as a helical span at residues 475 to 495 (YIVGRIWVGLWLVIIVVVIVA). The Cytoplasmic portion of the chain corresponds to 496–507 (VEGSFLVKFISR). Residues 508–530 (FTQEIFSILISLIFIYETFSKLG) traverse the membrane as a helical segment. Residues 531–583 (KIFKAHPLVLNYEHLNDSLDNPFHPVVKEHIEYHEDGNKTVHEVIHERAYPNT) are Extracellular-facing. N-linked (GlcNAc...) asparagine glycosylation is found at Asn-546 and Asn-568. Residues 584–604 (ALLSMCLMFGCFFIAYFLRQF) form a helical membrane-spanning segment. Topologically, residues 605–615 (KNGHFLPGPIR) are cytoplasmic. Residues 616 to 636 (RMIGDFGVPIAIFFMIAVDIT) form a helical membrane-spanning segment. The Extracellular segment spans residues 637–676 (IEDAYTQKLVVPKGLMVSNPNARGWFINPLGEKKPFPAWM). A helical transmembrane segment spans residues 677 to 697 (MGACCVPALLVFILIFLESQI). Over 698–713 (TTLIVSKPERKMVKGS) the chain is Cytoplasmic. The helical transmembrane segment at 714-732 (GFHLDLLILVTMGGIASLF) threads the bilayer. Residues 733–750 (GVPWLSAATVRSVTHANA) form a discontinuously helical membrane-spanning segment. Topologically, residues 751 to 769 (LTVMSKGPKPEIEKVLEQR) are cytoplasmic. 2 helical membrane passes run 770 to 790 (ISGM…PILK) and 791 to 809 (MIPM…ITSL). Residues 810-847 (SGIQMWDRMLLLIVPRKYYPADAYAQRVTTMKMHLFTL) lie on the Cytoplasmic side of the membrane. Positions 848-878 (IQMVCLGALWMVKMSAFSLALPFVLILTIPL) form an intramembrane region, discontinuously helical. Cys-852 carries the S-palmitoyl cysteine lipid modification. The Cytoplasmic segment spans residues 879–918 (RMAITGTLFTDKEMKCLDASDGKVKFEEEPGEDMYESPLP).

The protein belongs to the anion exchanger (TC 2.A.31) family. In terms of assembly, a dimer in solution, it spans the membrane asymmetrically and appears to be tetrameric.

It is found in the cell membrane. The enzyme catalyses hydrogencarbonate(in) + chloride(out) = hydrogencarbonate(out) + chloride(in). Functions both as a transporter that mediates electroneutral anion exchange across the cell membrane and as a structural protein. Major integral membrane glycoprotein of the erythrocyte membrane; required for normal flexibility and stability of the erythrocyte membrane and for normal erythrocyte shape via the interactions of its cytoplasmic domain with cytoskeletal proteins, glycolytic enzymes, and hemoglobin. Functions as a transporter that mediates the 1:1 exchange of inorganic anions across the erythrocyte membrane. Mediates chloride-bicarbonate exchange in the kidney, and is required for normal acidification of the urine. The protein is Band 3 anion exchange protein (slc4a1) of Oncorhynchus mykiss (Rainbow trout).